Reading from the N-terminus, the 215-residue chain is MLQVYLVRHGETQWNAERRIQGQSDSPLTAKGEQQAMQVGERARTLGITHIVSSDLGRTRRTAEIIAQACGCDITFDARLRELDMGVLEKRHIDTLTEEEENWRRQLVNGTVDGRIPDGESMQELSDRVNAALASCLELPQGSRPLLVSHGIALGCLVSTILGLPAWAERRLRLRNCSISRVDYQESLWLAPGWVVETAGDVSHLDAPALDELQR.

Residues 8–15 (RHGETQWN), 21–22 (QG), R58, R60, 82–85 (ELDM), 104–105 (RR), and 151–152 (GI) contribute to the substrate site. H9 acts as the Tele-phosphohistidine intermediate in catalysis. The active-site Proton donor/acceptor is the E82.

The protein belongs to the phosphoglycerate mutase family. GpmB subfamily.

It carries out the reaction (2R)-2-phosphoglycerate = (2R)-3-phosphoglycerate. It functions in the pathway carbohydrate degradation; glycolysis; pyruvate from D-glyceraldehyde 3-phosphate: step 3/5. The protein is Probable phosphoglycerate mutase GpmB of Citrobacter koseri (strain ATCC BAA-895 / CDC 4225-83 / SGSC4696).